The sequence spans 34 residues: Antimicrobial peptide Alo-1 (34 aa).

Disulfide bonds link Cys-1–Cys-18, Cys-8–Cys-22, and Cys-17–Cys-33.

The protein resides in the secreted. Functionally, has antifungal activity against C.glabrata. The sequence is that of Antimicrobial peptide Alo-1 from Acrocinus longimanus (Giant harlequin beetle).